A 276-amino-acid polypeptide reads, in one-letter code: Elongation factor Ts (276 aa).

Residues threonine 80–valine 83 are involved in Mg(2+) ion dislocation from EF-Tu.

This sequence belongs to the EF-Ts family.

It localises to the cytoplasm. Its function is as follows. Associates with the EF-Tu.GDP complex and induces the exchange of GDP to GTP. It remains bound to the aminoacyl-tRNA.EF-Tu.GTP complex up to the GTP hydrolysis stage on the ribosome. The protein is Elongation factor Ts of Kocuria rhizophila (strain ATCC 9341 / DSM 348 / NBRC 103217 / DC2201).